A 300-amino-acid polypeptide reads, in one-letter code: MADRRDHRIIDGKAVQQRLLAGIRAELEAAAETHPVGRLVSISIGPSPEIEVYVRNQARAAATAGLPFEQVVWEASATQEACKRKIAALNDDPSVLGIILQRPVPAHIHVRSLQSAIHPLKDVEGMNPASIGNIVYNDIALAPCTAAAAVEMVRATGLPLPGLEVVMIGHSEIVGKPVAFLLMAEGATVTVCHHMTRSVAMHSRRADVVIVAVGKAHLIGPEMIKPGAAVIDIGINQVTDAAGKVRILGDVDTEAVREVAGWITPVPGGVGPVTVAMLMRNALTAHRRQVAAGWLEAAKA.

NADP(+) contacts are provided by residues 169–171 (GHS) and isoleucine 235.

This sequence belongs to the tetrahydrofolate dehydrogenase/cyclohydrolase family. In terms of assembly, homodimer.

The enzyme catalyses (6R)-5,10-methylene-5,6,7,8-tetrahydrofolate + NADP(+) = (6R)-5,10-methenyltetrahydrofolate + NADPH. It catalyses the reaction (6R)-5,10-methenyltetrahydrofolate + H2O = (6R)-10-formyltetrahydrofolate + H(+). Its pathway is one-carbon metabolism; tetrahydrofolate interconversion. Catalyzes the oxidation of 5,10-methylenetetrahydrofolate to 5,10-methenyltetrahydrofolate and then the hydrolysis of 5,10-methenyltetrahydrofolate to 10-formyltetrahydrofolate. In Rhodobacter capsulatus (strain ATCC BAA-309 / NBRC 16581 / SB1003), this protein is Bifunctional protein FolD.